A 231-amino-acid chain; its full sequence is NifU-like protein 1, chloroplastic (231 aa).

The transit peptide at 1–69 (MMASLATSIS…SSQGEKISPL (69 aa)) directs the protein to the chloroplast.

The protein belongs to the NifU family. In terms of assembly, homodimer; disulfide-linked. In terms of tissue distribution, predominantly expressed in floral stalks and siliques. Expressed in leaves, cauline leaves, flower stalks and flowers (at protein level).

The protein resides in the plastid. The protein localises to the chloroplast stroma. Its function is as follows. Molecular scaffold for [Fe-S] cluster assembly of chloroplastic iron-sulfur proteins. This Arabidopsis thaliana (Mouse-ear cress) protein is NifU-like protein 1, chloroplastic (NIFU1).